Consider the following 423-residue polypeptide: D-tagatose-1,6-bisphosphate aldolase subunit GatZ (423 aa).

Belongs to the GatZ/KbaZ family. GatZ subfamily. As to quaternary structure, forms a complex with GatY.

Its pathway is carbohydrate metabolism; D-tagatose 6-phosphate degradation; D-glyceraldehyde 3-phosphate and glycerone phosphate from D-tagatose 6-phosphate: step 2/2. Functionally, component of the tagatose-1,6-bisphosphate aldolase GatYZ that is required for full activity and stability of the Y subunit. Could have a chaperone-like function for the proper and stable folding of GatY. When expressed alone, GatZ does not show any aldolase activity. Is involved in the catabolism of galactitol. In Salmonella agona (strain SL483), this protein is D-tagatose-1,6-bisphosphate aldolase subunit GatZ.